The primary structure comprises 415 residues: Gamma-glutamyl phosphate reductase (415 aa).

Belongs to the gamma-glutamyl phosphate reductase family.

The protein localises to the cytoplasm. It carries out the reaction L-glutamate 5-semialdehyde + phosphate + NADP(+) = L-glutamyl 5-phosphate + NADPH + H(+). It participates in amino-acid biosynthesis; L-proline biosynthesis; L-glutamate 5-semialdehyde from L-glutamate: step 2/2. Catalyzes the NADPH-dependent reduction of L-glutamate 5-phosphate into L-glutamate 5-semialdehyde and phosphate. The product spontaneously undergoes cyclization to form 1-pyrroline-5-carboxylate. This is Gamma-glutamyl phosphate reductase from Bacillus subtilis (strain 168).